The primary structure comprises 280 residues: Phosphonates import ATP-binding protein PhnC (280 aa).

The region spanning 2 to 245 (FELKNVTRRF…AVKEIYGTDK (244 aa)) is the ABC transporter domain. Position 34-41 (34-41 (GRSGAGKS)) interacts with ATP. Residues 257-280 (TSLESKRRAEDVSSGRVAKAAAVH) form a disordered region. A compositionally biased stretch (basic and acidic residues) spans 260–269 (ESKRRAEDVS).

This sequence belongs to the ABC transporter superfamily. Phosphonates importer (TC 3.A.1.9.1) family. As to quaternary structure, the complex is composed of two ATP-binding proteins (PhnC), two transmembrane proteins (PhnE) and a solute-binding protein (PhnD).

The protein resides in the cell inner membrane. It catalyses the reaction phosphonate(out) + ATP + H2O = phosphonate(in) + ADP + phosphate + H(+). Functionally, part of the ABC transporter complex PhnCDE involved in phosphonates import. Responsible for energy coupling to the transport system. The sequence is that of Phosphonates import ATP-binding protein PhnC from Rhizobium johnstonii (strain DSM 114642 / LMG 32736 / 3841) (Rhizobium leguminosarum bv. viciae).